The chain runs to 205 residues: Small ribosomal subunit protein uS4 (205 aa).

Positions 94–157 constitute an S4 RNA-binding domain; the sequence is SRLDTVVYRM…QQIPLIQESI (64 aa).

Belongs to the universal ribosomal protein uS4 family. In terms of assembly, part of the 30S ribosomal subunit. Contacts protein S5. The interaction surface between S4 and S5 is involved in control of translational fidelity.

In terms of biological role, one of the primary rRNA binding proteins, it binds directly to 16S rRNA where it nucleates assembly of the body of the 30S subunit. With S5 and S12 plays an important role in translational accuracy. This chain is Small ribosomal subunit protein uS4, found in Rickettsia prowazekii (strain Madrid E).